A 284-amino-acid polypeptide reads, in one-letter code: Acetylglutamate kinase (284 aa).

Residues 66–67, Arg88, and Asn179 contribute to the substrate site; that span reads GG.

It belongs to the acetylglutamate kinase family. ArgB subfamily.

Its subcellular location is the cytoplasm. The catalysed reaction is N-acetyl-L-glutamate + ATP = N-acetyl-L-glutamyl 5-phosphate + ADP. Its pathway is amino-acid biosynthesis; L-arginine biosynthesis; N(2)-acetyl-L-ornithine from L-glutamate: step 2/4. In terms of biological role, catalyzes the ATP-dependent phosphorylation of N-acetyl-L-glutamate. This Actinobacillus pleuropneumoniae serotype 7 (strain AP76) protein is Acetylglutamate kinase.